Consider the following 156-residue polypeptide: Small ribosomal subunit protein uS7 (156 aa).

Belongs to the universal ribosomal protein uS7 family. Part of the 30S ribosomal subunit. Contacts proteins S9 and S11.

Its function is as follows. One of the primary rRNA binding proteins, it binds directly to 16S rRNA where it nucleates assembly of the head domain of the 30S subunit. Is located at the subunit interface close to the decoding center, probably blocks exit of the E-site tRNA. In Edwardsiella ictaluri (strain 93-146), this protein is Small ribosomal subunit protein uS7.